A 465-amino-acid polypeptide reads, in one-letter code: Apolipoprotein N-acyltransferase (465 aa).

A run of 6 helical transmembrane segments spans residues Ala12–Leu32, Ala49–Leu69, Leu80–Leu100, Leu122–Ile142, Trp161–Leu181, and Cys189–Pro209. The 228-residue stretch at Trp221–Arg448 folds into the CN hydrolase domain. Residue Glu262 is the Proton acceptor of the active site. Lys312 is a catalytic residue. Residue Cys360 is the Nucleophile of the active site.

It belongs to the CN hydrolase family. Apolipoprotein N-acyltransferase subfamily.

It localises to the cell inner membrane. The enzyme catalyses N-terminal S-1,2-diacyl-sn-glyceryl-L-cysteinyl-[lipoprotein] + a glycerophospholipid = N-acyl-S-1,2-diacyl-sn-glyceryl-L-cysteinyl-[lipoprotein] + a 2-acyl-sn-glycero-3-phospholipid + H(+). It participates in protein modification; lipoprotein biosynthesis (N-acyl transfer). Functionally, catalyzes the phospholipid dependent N-acylation of the N-terminal cysteine of apolipoprotein, the last step in lipoprotein maturation. The protein is Apolipoprotein N-acyltransferase of Parasynechococcus marenigrum (strain WH8102).